Here is a 337-residue protein sequence, read N- to C-terminus: Dihydroorotate dehydrogenase (quinone) (337 aa).

FMN is bound by residues 62–66 (AGLDK) and threonine 86. Lysine 66 is a binding site for substrate. 111-115 (NRFGF) is a binding site for substrate. The FMN site is built by asparagine 139 and asparagine 172. Position 172 (asparagine 172) interacts with substrate. Serine 175 (nucleophile) is an active-site residue. Asparagine 177 provides a ligand contact to substrate. Lysine 217 and threonine 245 together coordinate FMN. 246–247 (NT) contributes to the substrate binding site. FMN-binding positions include glycine 268, glycine 297, and 318 to 319 (YS).

This sequence belongs to the dihydroorotate dehydrogenase family. Type 2 subfamily. As to quaternary structure, monomer. It depends on FMN as a cofactor.

The protein resides in the cell membrane. The catalysed reaction is (S)-dihydroorotate + a quinone = orotate + a quinol. Its pathway is pyrimidine metabolism; UMP biosynthesis via de novo pathway; orotate from (S)-dihydroorotate (quinone route): step 1/1. Its function is as follows. Catalyzes the conversion of dihydroorotate to orotate with quinone as electron acceptor. The protein is Dihydroorotate dehydrogenase (quinone) of Methylobacillus flagellatus (strain ATCC 51484 / DSM 6875 / VKM B-1610 / KT).